A 132-amino-acid polypeptide reads, in one-letter code: Small ribosomal subunit protein eS24 (132 aa).

Over residues 92-101 (LARHGLYEKK) the composition is skewed to basic and acidic residues. The tract at residues 92-132 (LARHGLYEKKRPTRKQRKERKNRMKKVRGTKKSKVGAAAKK) is disordered. Basic residues predominate over residues 102-132 (RPTRKQRKERKNRMKKVRGTKKSKVGAAAKK).

Belongs to the eukaryotic ribosomal protein eS24 family.

In Spodoptera frugiperda (Fall armyworm), this protein is Small ribosomal subunit protein eS24 (RpS24).